A 262-amino-acid polypeptide reads, in one-letter code: Acyl-[acyl-carrier-protein]--UDP-N-acetylglucosamine O-acyltransferase (262 aa).

This sequence belongs to the transferase hexapeptide repeat family. LpxA subfamily. Homotrimer.

The protein resides in the cytoplasm. It catalyses the reaction a (3R)-hydroxyacyl-[ACP] + UDP-N-acetyl-alpha-D-glucosamine = a UDP-3-O-[(3R)-3-hydroxyacyl]-N-acetyl-alpha-D-glucosamine + holo-[ACP]. It functions in the pathway glycolipid biosynthesis; lipid IV(A) biosynthesis; lipid IV(A) from (3R)-3-hydroxytetradecanoyl-[acyl-carrier-protein] and UDP-N-acetyl-alpha-D-glucosamine: step 1/6. In terms of biological role, involved in the biosynthesis of lipid A, a phosphorylated glycolipid that anchors the lipopolysaccharide to the outer membrane of the cell. The sequence is that of Acyl-[acyl-carrier-protein]--UDP-N-acetylglucosamine O-acyltransferase from Escherichia coli O157:H7.